Here is a 536-residue protein sequence, read N- to C-terminus: Prickle planar cell polarity protein 3-B (536 aa).

The region spanning 66–175 (SGSQRDSLCD…CVRPISGTMS (110 aa)) is the PET domain. LIM zinc-binding domains follow at residues 177–241 (TVCQ…ELKR), 242–302 (PRCL…LYAQ), and 305–366 (DSCG…HTKS). The disordered stretch occupies residues 418–536 (PTQAAPARSL…KKKDKSCFLS (119 aa)). Residues 438-448 (FSRECPNRRSL) are compositionally biased toward basic and acidic residues. The segment covering 450–467 (DLSSHTRTPTRVTFQLPS) has biased composition (polar residues). Positions 474–487 (SISFSRPSFTSSSS) are enriched in low complexity.

This sequence belongs to the prickle / espinas / testin family. Interacts with vangl2 via its C-terminus. The vangl2-dependent membrane recruitment of prickle3 is a prerequisite for its polarization. Interacts with wtip. Wtip is involved in the recruitment of prickle3 to the basal body.

It localises to the cytoplasm. Its subcellular location is the cell membrane. It is found in the mitochondrion. Functionally, involved in the planar cell polarity (PCP) pathway that is essential for the polarization of epithelial cells during morphogenetic processes, including gastrulation and neurulation. PCP is maintained by two molecular modules, the global and the core modules. Proteins of the core module include the proteins Frizzled (Fz), Disheveled (Dsh), Van Gogh (Vang), Prickle (Pk), Flamingo (Fmi, Celsr) and Diego (Dgo). The core module proteins develop subcellular asymmetry, accumulating in two groups on opposite sides of epithelial cells. Distinct proximal (Vang, Pk and Fmi) and distal (Fz, Dsh, Dgo and Fmi) complexes segregate to opposite sides of the cell, where they interact with the opposite complex in the neighboring cell at or near the adherents junctions. Directional information to orient polarization with respect to the tissue axes is provided by the global module which involves Wnt proteins. Involved in the organization of the basal body. Involved in cilia growth and positioning. Required for proper assembly, stability, and function of mitochondrial membrane ATP synthase (mitochondrial complex V). The chain is Prickle planar cell polarity protein 3-B (prickle3-b) from Xenopus laevis (African clawed frog).